The chain runs to 522 residues: Gypsy retrotransposon integrase-like protein 1 (522 aa).

In terms of domain architecture, Integrase catalytic spans 135–292; the sequence is KVENPWSLVT…TPYFQMFSRN (158 aa). Ser-502 carries the phosphoserine modification.

This chain is Gypsy retrotransposon integrase-like protein 1 (GIN1), found in Pongo abelii (Sumatran orangutan).